We begin with the raw amino-acid sequence, 155 residues long: Transcription antitermination protein NusB (155 aa).

This sequence belongs to the NusB family.

Functionally, involved in transcription antitermination. Required for transcription of ribosomal RNA (rRNA) genes. Binds specifically to the boxA antiterminator sequence of the ribosomal RNA (rrn) operons. This is Transcription antitermination protein NusB from Mesorhizobium japonicum (strain LMG 29417 / CECT 9101 / MAFF 303099) (Mesorhizobium loti (strain MAFF 303099)).